Consider the following 338-residue polypeptide: Adenylosuccinate synthetase (338 aa).

GTP-binding positions include 12–18 and 42–44; these read GDEGKGK and GHT. Catalysis depends on Asp13, which acts as the Proton acceptor. Asp13 and Gly42 together coordinate Mg(2+). Residues 13-16, 40-43, Thr127, Arg141, Gln179, Thr194, and Arg256 contribute to the IMP site; these read DEGK and NAGH. His43 acts as the Proton donor in catalysis. 252–258 serves as a coordination point for substrate; sequence TVTGRRR. GTP is bound by residues Arg258, 284–286, and 324–326; these read CLD and STG.

Belongs to the adenylosuccinate synthetase family. As to quaternary structure, homodimer. The cofactor is Mg(2+).

The protein localises to the cytoplasm. It carries out the reaction IMP + L-aspartate + GTP = N(6)-(1,2-dicarboxyethyl)-AMP + GDP + phosphate + 2 H(+). It participates in purine metabolism; AMP biosynthesis via de novo pathway; AMP from IMP: step 1/2. Its function is as follows. Plays an important role in the de novo pathway of purine nucleotide biosynthesis. Catalyzes the first committed step in the biosynthesis of AMP from IMP. The protein is Adenylosuccinate synthetase of Methanococcus maripaludis (strain DSM 14266 / JCM 13030 / NBRC 101832 / S2 / LL).